The sequence spans 676 residues: MRVLGGRCGALLACLLLVLPVSEANFLSKQQASQVLVRKRRANSLLEETKQGNLERECIEELCNKEEAREVFENDPETDYFYPKYLVCLRSFQTGLFTAARQSTNAYPDLRSCVNAIPDQCSPLPCNEDGYMSCKDGKASFTCTCKPGWQGEKCEFDINECKDPSNINGGCSQICDNTPGSYHCSCKNGFVMLSNKKDCKDVDECSLKPSICGTAVCKNIPGDFECECPEGYRYNLKSKSCEDIDECSENMCAQLCVNYPGGYTCYCDGKKGFKLAQDQKSCEVVSVCLPLNLDTKYELLYLAEQFAGVVLYLKFRLPEISRFSAEFDFRTYDSEGVILYAESIDHSAWLLIALRGGKIEVQLKNEHTSKITTGGDVINNGLWNMVSVEELEHSISIKIAKEAVMDINKPGPLFKPENGLLETKVYFAGFPRKVESELIKPINPRLDGCIRSWNLMKQGASGIKEIIQEKQNKHCLVTVEKGSYYPGSGIAQFHIDYNNVSSAEGWHVNVTLNIRPSTGTGVMLALVSGNNTVPFAVSLVDSTSEKSQDILLSVENTVIYRIQALSLCSDQQSHLEFRVNRNNLELSTPLKIETISHEDLQRQLAVLDKAMKAKVATYLGGLPDVPFSATPVNAFYNGCMEVNINGVQLDLDEAISKHNDIRAHSCPSVWKKTKNS.

Positions 1–24 are cleaved as a signal peptide; that stretch reads MRVLGGRCGALLACLLLVLPVSEA. Residues 25–41 constitute a propeptide that is removed on maturation; sequence NFLSKQQASQVLVRKRR. The region spanning 42-87 is the Gla domain; it reads ANSLLEETKQGNLERECIEELCNKEEAREVFENDPETDYFYPKYLV. Residues Glu47, Glu48, Glu55, Glu57, Glu60, Glu61, Glu66, Glu67, Glu70, Glu73, and Glu77 each carry the 4-carboxyglutamate modification. A disulfide bond links Cys58 and Cys63. Positions 88-116 are thrombin-sensitive; sequence CLRSFQTGLFTAARQSTNAYPDLRSCVNA. The region spanning 117–155 is the EGF-like 1 domain; the sequence is IPDQCSPLPCNEDGYMSCKDGKASFTCTCKPGWQGEKCE. Intrachain disulfides connect Cys121–Cys134, Cys126–Cys143, Cys145–Cys154, Cys161–Cys175, Cys171–Cys184, Cys186–Cys199, Cys205–Cys217, Cys212–Cys226, Cys228–Cys241, Cys247–Cys256, Cys252–Cys265, Cys267–Cys282, and Cys449–Cys475. Position 136 is a (3R)-3-hydroxyaspartate (Asp136). The EGF-like 2; calcium-binding domain maps to 157–200; it reads DINECKDPSNINGGCSQICDNTPGSYHCSCKNGFVMLSNKKDCK. An EGF-like 3; calcium-binding domain is found at 201–242; that stretch reads DVDECSLKPSICGTAVCKNIPGDFECECPEGYRYNLKSKSCE. Residues 243–283 form the EGF-like 4; calcium-binding domain; sequence DIDECSENMCAQLCVNYPGGYTCYCDGKKGFKLAQDQKSCE. 2 Laminin G-like domains span residues 299–475 and 484–666; these read LLYL…NKHC and YYPG…AHSC. Asn499, Asn509, and Asn530 each carry an N-linked (GlcNAc...) asparagine glycan. A disulfide bridge links Cys639 with Cys666.

The iron and 2-oxoglutarate dependent 3-hydroxylation of aspartate and asparagine is (R) stereospecific within EGF domains. Plasma.

It localises to the secreted. Functionally, anticoagulant plasma protein; it is a cofactor to activated protein C in the degradation of coagulation factors Va and VIIIa. It helps to prevent coagulation and stimulating fibrinolysis. The sequence is that of Vitamin K-dependent protein S (PROS1) from Homo sapiens (Human).